A 445-amino-acid polypeptide reads, in one-letter code: Phosphoglucosamine mutase (445 aa).

The Phosphoserine intermediate role is filled by Ser102. The Mg(2+) site is built by Ser102, Asp241, Asp243, and Asp245. The residue at position 102 (Ser102) is a Phosphoserine.

Belongs to the phosphohexose mutase family. Requires Mg(2+) as cofactor. Activated by phosphorylation.

The catalysed reaction is alpha-D-glucosamine 1-phosphate = D-glucosamine 6-phosphate. Its function is as follows. Catalyzes the conversion of glucosamine-6-phosphate to glucosamine-1-phosphate. The sequence is that of Phosphoglucosamine mutase from Haemophilus influenzae (strain 86-028NP).